The chain runs to 997 residues: FIP1[III]-like protein (997 aa).

4 disordered regions span residues 250-272 (ITSN…LNSV), 289-475 (AGSF…ETEG), 534-553 (SRSS…KEED), and 880-900 (QGKV…TIEQ). Polar residues predominate over residues 261 to 272 (SHSYGSKDLNSV). Composition is skewed to basic and acidic residues over residues 309–323 (TPSD…KEES), 334–346 (SVER…DRIR), 367–379 (ESLK…DQRE), and 388–404 (RLAE…EDSG). Residues 397-404 (IKRGEDSG) carry the Nuclear localization signal motif. Residues 534-547 (SRSSFDLNQRNSRS) show a composition bias toward polar residues. Residues 930–963 (EIIEEVKGVEIDNERIQESLKKMEKRRERFKGTK) are a coiled coil.

The protein belongs to the FIP1 family. As to quaternary structure, component of the cleavage and polyadenylation specificity factor (CPSF) complex. Forms a complex with cleavage and polyadenylation specificity factor (CPSF) subunits CLPS5, FIPS5, PAPS4, PCFS1, CSTF64 and CPSF30.

It localises to the nucleus. Its function is as follows. Component of the cleavage and polyadenylation specificity factor (CPSF) complex that plays a key role in pre-mRNA 3'-end formation, recognizing the AAUAAA signal sequence and interacting with poly(A) polymerase and other factors to bring about cleavage and poly(A) addition. FIP1L1 contributes to poly(A) site recognition and stimulates poly(A) addition. Binds to U-rich RNA sequence elements surrounding the poly(A) site. May act to tether poly(A) polymerase to the CPSF complex. This chain is FIP1[III]-like protein, found in Arabidopsis thaliana (Mouse-ear cress).